The sequence spans 166 residues: Thiol peroxidase (166 aa).

A Thioredoxin domain is found at 18 to 164 (VKVGDKAPNF…YEKAIEAAKA (147 aa)). The Cysteine sulfenic acid (-SOH) intermediate role is filled by Cys60. Cysteines 60 and 94 form a disulfide.

The protein belongs to the peroxiredoxin family. Tpx subfamily. In terms of assembly, homodimer.

The catalysed reaction is a hydroperoxide + [thioredoxin]-dithiol = an alcohol + [thioredoxin]-disulfide + H2O. Functionally, thiol-specific peroxidase that catalyzes the reduction of hydrogen peroxide and organic hydroperoxides to water and alcohols, respectively. Plays a role in cell protection against oxidative stress by detoxifying peroxides. The sequence is that of Thiol peroxidase from Halalkalibacterium halodurans (strain ATCC BAA-125 / DSM 18197 / FERM 7344 / JCM 9153 / C-125) (Bacillus halodurans).